Consider the following 347-residue polypeptide: ATPase GET3 (347 aa).

26 to 33 serves as a coordination point for ATP; sequence KGGVGKTT. The active site involves aspartate 57. The ATP site is built by glutamate 241 and asparagine 268. Zn(2+) contacts are provided by cysteine 279 and cysteine 282.

Belongs to the arsA ATPase family. Homodimer. Component of the Golgi to ER traffic (GET) complex, which is composed of GET1, GET2 and GET3. Within the complex, GET1 and GET2 form a heterotetramer which is stabilized by phosphatidylinositol binding and which binds to the GET3 homodimer. Interacts with the chloride channel protein GEF1.

Its subcellular location is the cytoplasm. The protein resides in the endoplasmic reticulum. The protein localises to the golgi apparatus. ATPase required for the post-translational delivery of tail-anchored (TA) proteins to the endoplasmic reticulum. Recognizes and selectively binds the transmembrane domain of TA proteins in the cytosol. This complex then targets to the endoplasmic reticulum by membrane-bound receptors GET1 and GET2, where the tail-anchored protein is released for insertion. This process is regulated by ATP binding and hydrolysis. ATP binding drives the homodimer towards the closed dimer state, facilitating recognition of newly synthesized TA membrane proteins. ATP hydrolysis is required for insertion. Subsequently, the homodimer reverts towards the open dimer state, lowering its affinity for the GET1-GET2 receptor, and returning it to the cytosol to initiate a new round of targeting. Cooperates with the HDEL receptor ERD2 to mediate the ATP-dependent retrieval of resident ER proteins that contain a C-terminal H-D-E-L retention signal from the Golgi to the ER. Involved in low-level resistance to the oxyanions arsenite and arsenate, and in heat tolerance. The chain is ATPase GET3 from Meyerozyma guilliermondii (strain ATCC 6260 / CBS 566 / DSM 6381 / JCM 1539 / NBRC 10279 / NRRL Y-324) (Yeast).